Reading from the N-terminus, the 398-residue chain is Phosphoglycerate kinase (398 aa).

Substrate is bound by residues 21-23 (DFN), arginine 41, 64-67 (HLGR), arginine 123, and arginine 156. ATP contacts are provided by residues lysine 207, glycine 294, glutamate 325, and 354 to 357 (GGDS).

Belongs to the phosphoglycerate kinase family. Monomer.

The protein resides in the cytoplasm. It catalyses the reaction (2R)-3-phosphoglycerate + ATP = (2R)-3-phospho-glyceroyl phosphate + ADP. It participates in carbohydrate degradation; glycolysis; pyruvate from D-glyceraldehyde 3-phosphate: step 2/5. The chain is Phosphoglycerate kinase from Salinibacter ruber (strain DSM 13855 / M31).